The sequence spans 346 residues: Protein MelA (346 aa).

2 consecutive VOC domains span residues 12-141 (GIEF…DFEA) and 155-305 (EVDH…IFTK). Residues His-158, His-237, and Glu-314 each contribute to the Fe cation site.

Belongs to the 4HPPD family. Fe cation serves as cofactor.

It localises to the cytoplasm. The protein operates within pigment biosynthesis; melanin biosynthesis. In Shewanella colwelliana (Alteromonas colwelliana), this protein is Protein MelA (melA).